A 446-amino-acid chain; its full sequence is C-type lectin domain family 18 member C (446 aa).

The signal sequence occupies residues 1–26 (MLHPETSPGRGHLLAVLLALLGTAWA). The SCP domain occupies 52–182 (LSLHNRLRSW…AAIEAFVCAY (131 aa)). N144 carries N-linked (GlcNAc...) asparagine glycosylation. Residues 228–261 (PRNPCRMSCQNHGRLNISTCHCHCPPGYTGRYCQ) form the EGF-like domain. Intrachain disulfides connect C236–C249, C251–C260, C327–C432, and C408–C424. The C-type lectin domain maps to 306 to 433 (IDGDCFMVSS…CKTRNRYICQ (128 aa)).

In terms of tissue distribution, detected in peripheral blood cells.

The protein localises to the secreted. It is found in the endoplasmic reticulum. Its subcellular location is the golgi apparatus. It localises to the endosome. Functionally, binds polysaccharidesin a Ca(2+)-independent manner with a preferentially binding to fucoidan, beta-glucans and galactans. The protein is C-type lectin domain family 18 member C (CLEC18C) of Homo sapiens (Human).